A 185-amino-acid chain; its full sequence is MNVSHPAVHPVGVPPALGGQAVPPRMRMRVRMEYLVFQGMPLPGSLGGLMLRLGQFCSALIAFSVMVSIRDFSVTAFCYLLAATVLQCLWSLALAVIDVYALLVKRSLRNPLLVSIFVVGDGVTATLTFAAACASAGVVVLIGNDISMCKSNPCANYEAAIIMAFLSWFMVSISFVLTFWMLATL.

Residues 1 to 48 (MNVSHPAVHPVGVPPALGGQAVPPRMRMRVRMEYLVFQGMPLPGSLGG) lie on the Cytoplasmic side of the membrane. A helical transmembrane segment spans residues 49–69 (LMLRLGQFCSALIAFSVMVSI). At 70–76 (RDFSVTA) the chain is on the extracellular side. Residues 77 to 97 (FCYLLAATVLQCLWSLALAVI) form a helical membrane-spanning segment. The Cytoplasmic portion of the chain corresponds to 98–121 (DVYALLVKRSLRNPLLVSIFVVGD). A helical transmembrane segment spans residues 122 to 142 (GVTATLTFAAACASAGVVVLI). Over 143–160 (GNDISMCKSNPCANYEAA) the chain is Extracellular. A helical membrane pass occupies residues 161–181 (IIMAFLSWFMVSISFVLTFWM). Residues 182-185 (LATL) are Cytoplasmic-facing.

Belongs to the Casparian strip membrane proteins (CASP) family. In terms of assembly, homodimer and heterodimers.

It is found in the cell membrane. In Pinus contorta (Shore pine), this protein is CASP-like protein 5A1.